We begin with the raw amino-acid sequence, 151 residues long: Ribosome maturation factor RimP (151 aa).

It belongs to the RimP family.

It is found in the cytoplasm. Its function is as follows. Required for maturation of 30S ribosomal subunits. The polypeptide is Ribosome maturation factor RimP (Mannheimia succiniciproducens (strain KCTC 0769BP / MBEL55E)).